The primary structure comprises 386 residues: AT-hook motif nuclear-localized protein 8 (386 aa).

Disordered regions lie at residues 1 to 175 (MDSR…LGGT) and 303 to 372 (KQSS…LHPH). Residues 54–70 (QQQSQTFHQQQQQQMDQ) show a composition bias toward low complexity. Residues 101 to 110 (VKKKRGRPRK) show a composition bias toward basic residues. The short motif at 102 to 110 (KKKRGRPRK) is the Bipartite nuclear localization signal element. A DNA-binding region (a.T hook 1) is located at residues 102–114 (KKKRGRPRKYTPD). The span at 126–135 (PLLSAASNSY) shows a compositional bias: polar residues. A compositionally biased stretch (gly residues) spans 136–147 (GEGGVGDSGGNG). Positions 155 to 167 (KRNRGRPPGSSKK) form a DNA-binding region, a.T hook 2. Positions 174–316 (GTSGVGFTPH…VNIARGQNPE (143 aa)) constitute a PPC domain. 2 stretches are compositionally biased toward low complexity: residues 328–337 (GSVSQGPSSE) and 361–372 (QQQQQQQPLHPH).

It is found in the nucleus. Functionally, transcription factor that specifically binds AT-rich DNA sequences related to the nuclear matrix attachment regions (MARs). The polypeptide is AT-hook motif nuclear-localized protein 8 (Arabidopsis thaliana (Mouse-ear cress)).